Reading from the N-terminus, the 252-residue chain is Membrane protein insertase YidC (252 aa).

The first 19 residues, 1–19, serve as a signal peptide directing secretion; sequence MKKVLWIIIIILMVGALAG. Cys-20 carries the N-palmitoyl cysteine lipid modification. The S-diacylglycerol cysteine moiety is linked to residue Cys-20. Transmembrane regions (helical) follow at residues 34–54, 58–78, 131–151, 162–182, 201–221, and 223–243; these read IWNH…ADLL, FGLS…PLMI, MAGC…YFAI, FLWF…VAGI, VIIY…PSAL, and LYWV…VVRF.

This sequence belongs to the OXA1/ALB3/YidC family. Type 2 subfamily.

Its subcellular location is the cell membrane. Functionally, required for the insertion and/or proper folding and/or complex formation of integral membrane proteins into the membrane. Involved in integration of membrane proteins that insert both dependently and independently of the Sec translocase complex, as well as at least some lipoproteins. This is Membrane protein insertase YidC from Alkalihalophilus pseudofirmus (strain ATCC BAA-2126 / JCM 17055 / OF4) (Bacillus pseudofirmus).